Consider the following 845-residue polypeptide: Beta-galactosidase 11 (845 aa).

The N-terminal stretch at 1–26 is a signal peptide; sequence MRKHSLDRWLLTAVLVVLLSSSSSFA. Residue N104 is glycosylated (N-linked (GlcNAc...) asparagine). E197 (proton donor) is an active-site residue. Residue E268 is the Nucleophile of the active site. Residues N269, N300, N395, N752, N784, and N814 are each glycosylated (N-linked (GlcNAc...) asparagine). The SUEL-type lectin domain occupies 751–840; the sequence is DNVSLTATLK…KMLAVQVKCG (90 aa).

The protein belongs to the glycosyl hydrolase 35 family.

The protein localises to the secreted. The protein resides in the extracellular space. It is found in the apoplast. The enzyme catalyses Hydrolysis of terminal non-reducing beta-D-galactose residues in beta-D-galactosides.. The polypeptide is Beta-galactosidase 11 (BGAL11) (Arabidopsis thaliana (Mouse-ear cress)).